The primary structure comprises 136 residues: Non-structural protein 1 (136 aa).

This sequence belongs to the pneumovirus non-structural protein 1 family. As to quaternary structure, monomer. Homomultimer. Heteromultimer with NS2. Interacts with the matrix protein M. Interacts with host ELOC and CUL2; this interaction allows NS1 to form an active E3 ligase with ELOC and CUL2. Interacts with host IRF3; this interaction leads to the disrupted association of IRF3 with CREBBP and thus reduced binding of IRF3 to the IFN-beta promoter. Interacts with host MAVS; this interaction prevents MAVS binding to RIGI and inhibits signaling pathway leading to interferon production. Interacts with host TRIM25 (via SPRY domain); this interaction suppresses RIGI ubiquitination and results in decreased interaction between RIGI and MAVS.

Its subcellular location is the host cytoplasm. The protein localises to the host mitochondrion. It is found in the host nucleus. Plays a major role in antagonizing the type I IFN-mediated antiviral response by degrading or inhibiting multiple cellular factors required for either IFN induction or response pathways. Acts cooperatively with NS2 to repress activation and nuclear translocation of host IFN-regulatory factor IRF3. Also disrupts the association of IRF3 with CREBBP. Interacts with host mitochondrial-associated membrane (MAM) MAVS and prevents the interaction with RIGI. Interacts with TRIM25 to suppress TRIM25-mediated RIGI ubiquitination and thereby RIGI-MAVS interaction. Together with NS2, participates in the proteasomal degradation of host STAT2, IRF3, IRF7, TBK1 and RIGI through a NS-degradasome involving CUL2 and Elongin-C. The degradasome requires an intact mitochondrial MAVS. Decreases the levels of host TRAF3 and IKBKE/IKK-epsilon. As functions other than disruptions of the type I IFN-mediated antiviral signaling pathways, induces host SOCS1 and SOCS3 expression. Suppresses premature apoptosis by an NF-kappa-B-dependent, interferon-independent mechanism and thus facilitates virus growth. Additionally, NS1 may serve some inhibitory role in viral transcription and RNA replication. Suppresses proliferation and activation of host CD103+ CD8+ cytotoxic T-lymphocytes and Th17 helper T-lymphocytes. This is Non-structural protein 1 (1C) from Bos taurus (Bovine).